The primary structure comprises 168 residues: SsrA-binding protein (168 aa).

Belongs to the SmpB family.

The protein localises to the cytoplasm. In terms of biological role, required for rescue of stalled ribosomes mediated by trans-translation. Binds to transfer-messenger RNA (tmRNA), required for stable association of tmRNA with ribosomes. tmRNA and SmpB together mimic tRNA shape, replacing the anticodon stem-loop with SmpB. tmRNA is encoded by the ssrA gene; the 2 termini fold to resemble tRNA(Ala) and it encodes a 'tag peptide', a short internal open reading frame. During trans-translation Ala-aminoacylated tmRNA acts like a tRNA, entering the A-site of stalled ribosomes, displacing the stalled mRNA. The ribosome then switches to translate the ORF on the tmRNA; the nascent peptide is terminated with the 'tag peptide' encoded by the tmRNA and targeted for degradation. The ribosome is freed to recommence translation, which seems to be the essential function of trans-translation. This chain is SsrA-binding protein, found in Mycobacterium sp. (strain JLS).